The chain runs to 124 residues: MKSIGCDIIKVGRFKNFLENKKKLERFFTHKEIENFKLKGGSVIESLAGKFAAKESLIKALSPLLQHKIHYGLKDIEVIKSLKGNAKFYLHNEIEKFAIKMNLKIYLTISHEKEYAIAFVMVEN.

Residues Asp7 and Glu55 each contribute to the Mg(2+) site.

It belongs to the P-Pant transferase superfamily. AcpS family. It depends on Mg(2+) as a cofactor.

It is found in the cytoplasm. It catalyses the reaction apo-[ACP] + CoA = holo-[ACP] + adenosine 3',5'-bisphosphate + H(+). Functionally, transfers the 4'-phosphopantetheine moiety from coenzyme A to a Ser of acyl-carrier-protein. The chain is Holo-[acyl-carrier-protein] synthase from Borrelia garinii subsp. bavariensis (strain ATCC BAA-2496 / DSM 23469 / PBi) (Borreliella bavariensis).